Reading from the N-terminus, the 211-residue chain is Thymidylate kinase (211 aa).

11–18 (GPDGAGKT) lines the ATP pocket.

The protein belongs to the thymidylate kinase family.

It carries out the reaction dTMP + ATP = dTDP + ADP. Functionally, phosphorylation of dTMP to form dTDP in both de novo and salvage pathways of dTTP synthesis. This Streptococcus pyogenes serotype M6 (strain ATCC BAA-946 / MGAS10394) protein is Thymidylate kinase.